A 405-amino-acid chain; its full sequence is Cytochrome P450 107B1 (405 aa).

Cysteine 352 lines the heme pocket.

It belongs to the cytochrome P450 family. Heme serves as cofactor.

Its subcellular location is the cytoplasm. Its function is as follows. Not known, probably involved in the catabolism of octane and guaiacol. It displays a weak activity in the O-dealkylation of 7-ethoxycoumarin. The protein is Cytochrome P450 107B1 (cyp107B1) of Saccharopolyspora erythraea (strain ATCC 11635 / DSM 40517 / JCM 4748 / NBRC 13426 / NCIMB 8594 / NRRL 2338).